The sequence spans 367 residues: MSDSQTLVVKLGTSVLTGGSRRLNRAHIVELVRQCAQLHAAGHRIVIVTSGAIAAGREHLGYPELPATIASKQLLAAVGQSRLIQLWEQLFSIYGIHVGQMLLTRADMEDRERFLNARDTLRALLDNNIVPVINENDAVATAEIKVGDNDNLSALAAILAGADKLLLLTDQQGLFTADPRNNPQAELIKDVHGIDDALRAIAGDSVSGLGTGGMGTKLQAADVACRAGIDTIIAAGSRPGVIGDVMEGISVGTLFHAEATPLENRKRWIFGAPPAGEITVDEGATAAILERGSSLLPKGIKSVTGNFSRGEVIRICNLEGRDIAHGVTRYNSDALRRIAGHHSQQIDAILGYEYGPVAVHRDDMIIR.

ATP is bound at residue K10. S50, D137, and N149 together coordinate substrate. ATP contacts are provided by residues 169 to 170 and 211 to 217; these read TD and TGGMGTK. The PUA domain maps to 275–353; it reads AGEITVDEGA…QQIDAILGYE (79 aa).

The protein belongs to the glutamate 5-kinase family.

It localises to the cytoplasm. The catalysed reaction is L-glutamate + ATP = L-glutamyl 5-phosphate + ADP. The protein operates within amino-acid biosynthesis; L-proline biosynthesis; L-glutamate 5-semialdehyde from L-glutamate: step 1/2. Catalyzes the transfer of a phosphate group to glutamate to form L-glutamate 5-phosphate. This Enterobacter sp. (strain 638) protein is Glutamate 5-kinase.